Reading from the N-terminus, the 577-residue chain is Acyl-coenzyme A synthetase ACSM2A, mitochondrial (577 aa).

A mitochondrion-targeting transit peptide spans 1–46 (MHWLRKVQGLCTLWGTQMSSRTLYINSRQLVSLQWGHQEVPAKFNF). Position 139 (Gln139) interacts with CoA. ATP is bound by residues 221–229 (TSGTSGLPK), 359–364 (ESYGQT), Asp446, and Arg461. Thr364 serves as a coordination point for substrate. Position 469-471 (469-471 (SGY)) interacts with CoA. Substrate is bound at residue Arg472. Arg501 contacts CoA. A Phosphoserine modification is found at Ser513. CoA contacts are provided by residues Lys532 and 540-542 (YPR). Lys557 lines the ATP pocket.

This sequence belongs to the ATP-dependent AMP-binding enzyme family. In terms of assembly, monomer. Mg(2+) is required as a cofactor. Requires Mn(2+) as cofactor.

Its subcellular location is the mitochondrion. It catalyses the reaction a medium-chain fatty acid + ATP + CoA = a medium-chain fatty acyl-CoA + AMP + diphosphate. It carries out the reaction benzoate + ATP + CoA = benzoyl-CoA + AMP + diphosphate. The enzyme catalyses hexanoate + ATP + CoA = hexanoyl-CoA + AMP + diphosphate. The catalysed reaction is butanoate + ATP + CoA = butanoyl-CoA + AMP + diphosphate. It catalyses the reaction octanoate + ATP + CoA = octanoyl-CoA + AMP + diphosphate. It carries out the reaction decanoate + ATP + CoA = decanoyl-CoA + AMP + diphosphate. Functionally, catalyzes the activation of fatty acids by CoA to produce an acyl-CoA, the first step in fatty acid metabolism. Capable of activating medium-chain fatty acids (e.g. butyric (C4) to decanoic (C10) acids), and certain carboxylate-containing xenobiotics, e.g. benzoate. The chain is Acyl-coenzyme A synthetase ACSM2A, mitochondrial (ACSM2A) from Homo sapiens (Human).